A 384-amino-acid chain; its full sequence is Mitogen-activated protein kinase 8 (384 aa).

Residues 26-321 (YQNLRPIGSG…VDEALQHPYI (296 aa)) enclose the Protein kinase domain. ATP contacts are provided by residues 33-38 (GSGAQG) and K55. D151 serves as the catalytic Proton acceptor. The residue at position 183 (T183) is a Phosphothreonine. Residues 183 to 185 (TPY) carry the TXY motif. Y185 is subject to Phosphotyrosine.

Belongs to the protein kinase superfamily. CMGC Ser/Thr protein kinase family. MAP kinase subfamily. Mg(2+) serves as cofactor. In terms of processing, dually phosphorylated on Thr-183 and Tyr-185, which activates the enzyme.

The protein resides in the cytoplasm. It is found in the nucleus. It localises to the synapse. The enzyme catalyses L-seryl-[protein] + ATP = O-phospho-L-seryl-[protein] + ADP + H(+). It catalyses the reaction L-threonyl-[protein] + ATP = O-phospho-L-threonyl-[protein] + ADP + H(+). Its activity is regulated as follows. Activated by threonine and tyrosine phosphorylation. In terms of biological role, responds to activation by environmental stress and pro-inflammatory cytokines by phosphorylating a number of transcription factors, primarily components of AP-1 such as c-Jun and ATF2 and thus regulates AP-1 transcriptional activity. May play a role in the regulation of the circadian clock. This chain is Mitogen-activated protein kinase 8 (mapk8), found in Danio rerio (Zebrafish).